We begin with the raw amino-acid sequence, 446 residues long: Tol-Pal system protein TolB (446 aa).

The signal sequence occupies residues 1–19 (MLLRYLFILFIIIPIKAFA).

It belongs to the TolB family. The Tol-Pal system is composed of five core proteins: the inner membrane proteins TolA, TolQ and TolR, the periplasmic protein TolB and the outer membrane protein Pal. They form a network linking the inner and outer membranes and the peptidoglycan layer.

It is found in the periplasm. In terms of biological role, part of the Tol-Pal system, which plays a role in outer membrane invagination during cell division and is important for maintaining outer membrane integrity. The protein is Tol-Pal system protein TolB of Pelagibacter ubique (strain HTCC1062).